The primary structure comprises 119 residues: Large ribosomal subunit protein bL20 (119 aa).

This sequence belongs to the bacterial ribosomal protein bL20 family.

Functionally, binds directly to 23S ribosomal RNA and is necessary for the in vitro assembly process of the 50S ribosomal subunit. It is not involved in the protein synthesizing functions of that subunit. This chain is Large ribosomal subunit protein bL20, found in Dehalococcoides mccartyi (strain ATCC BAA-2266 / KCTC 15142 / 195) (Dehalococcoides ethenogenes (strain 195)).